We begin with the raw amino-acid sequence, 1783 residues long: Chitin synthase A (1783 aa).

N-linked (GlcNAc...) asparagine glycans are attached at residues asparagine 159, asparagine 637, asparagine 652, asparagine 664, and asparagine 669. 2 helical membrane passes run isoleucine 745–valine 765 and leucine 781–phenylalanine 801. Asparagine 1014 and asparagine 1018 each carry an N-linked (GlcNAc...) asparagine glycan. The chain crosses the membrane as a helical span at residues isoleucine 1051–leucine 1071. An N-linked (GlcNAc...) asparagine glycan is attached at asparagine 1416. 3 helical membrane-spanning segments follow: residues phenylalanine 1441–glycine 1461, phenylalanine 1474–isoleucine 1494, and isoleucine 1502–tyrosine 1522. Asparagine 1529 and asparagine 1617 each carry an N-linked (GlcNAc...) asparagine glycan. Positions threonine 1659–glutamine 1724 are disordered. Polar residues predominate over residues arginine 1664–proline 1688. N-linked (GlcNAc...) asparagine glycosylation occurs at asparagine 1695. The DEK-C domain maps to glycine 1725–alanine 1781.

It belongs to the chitin synthase family. Class V subfamily.

Its subcellular location is the cell membrane. It catalyses the reaction [(1-&gt;4)-N-acetyl-beta-D-glucosaminyl](n) + UDP-N-acetyl-alpha-D-glucosamine = [(1-&gt;4)-N-acetyl-beta-D-glucosaminyl](n+1) + UDP + H(+). Polymerizes chitin, a structural polymer of the cell wall and septum, by transferring the sugar moiety of UDP-GlcNAc to the non-reducing end of the growing chitin polymer. Responsible for about 29% of the chitin in conidial walls, is essential for conidial wall strength in media with high water potential and contributes to strength of hyphal tips. In Colletotrichum graminicola (Maize anthracnose fungus), this protein is Chitin synthase A.